The following is a 293-amino-acid chain: uncharacterized protein (293 aa).

This is an uncharacterized protein from Treponema pallidum (strain Nichols).